A 341-amino-acid chain; its full sequence is DNA-directed RNA polymerase subunit alpha (341 aa).

The segment at 1 to 237 (MLSLSKNWNA…EQLQLFISFE (237 aa)) is alpha N-terminal domain (alpha-NTD). Residues 252 to 341 (FSPYLLKRVD…LSKRYEDSYN (90 aa)) are alpha C-terminal domain (alpha-CTD).

Belongs to the RNA polymerase alpha chain family. In terms of assembly, homodimer. The RNAP catalytic core consists of 2 alpha, 1 beta, 1 beta' and 1 omega subunit. When a sigma factor is associated with the core the holoenzyme is formed, which can initiate transcription.

The catalysed reaction is RNA(n) + a ribonucleoside 5'-triphosphate = RNA(n+1) + diphosphate. In terms of biological role, DNA-dependent RNA polymerase catalyzes the transcription of DNA into RNA using the four ribonucleoside triphosphates as substrates. This chain is DNA-directed RNA polymerase subunit alpha, found in Rickettsia bellii (strain OSU 85-389).